The chain runs to 314 residues: tRNA pseudouridine synthase B (314 aa).

His43 contributes to the substrate binding site. Residue Asp48 is the Nucleophile of the active site. Residues Tyr76, Tyr179, and Leu200 each coordinate substrate.

This sequence belongs to the pseudouridine synthase TruB family. Type 1 subfamily.

The enzyme catalyses uridine(55) in tRNA = pseudouridine(55) in tRNA. Responsible for synthesis of pseudouridine from uracil-55 in the psi GC loop of transfer RNAs. In Salmonella choleraesuis (strain SC-B67), this protein is tRNA pseudouridine synthase B.